We begin with the raw amino-acid sequence, 453 residues long: Bifunctional protein GlmU (453 aa).

The segment at 1–225 (MHAHVILAAG…AEEALGVNTR (225 aa)) is pyrophosphorylase. UDP-N-acetyl-alpha-D-glucosamine contacts are provided by residues 7–10 (LAAG), lysine 21, glutamine 72, and 77–78 (GT). Aspartate 102 provides a ligand contact to Mg(2+). UDP-N-acetyl-alpha-D-glucosamine is bound by residues glycine 138, glutamate 152, asparagine 167, and asparagine 223. Residue asparagine 223 coordinates Mg(2+). Residues 226–246 (EELARVEGVLLRRLRAEWMGK) form a linker region. The interval 247-453 (GVRMILPETI…GYALRKLGEG (207 aa)) is N-acetyltransferase. UDP-N-acetyl-alpha-D-glucosamine-binding residues include arginine 329 and lysine 347. Histidine 359 acts as the Proton acceptor in catalysis. UDP-N-acetyl-alpha-D-glucosamine-binding residues include tyrosine 362 and asparagine 373. Residues alanine 376, 382–383 (NY), serine 401, alanine 419, and arginine 436 each bind acetyl-CoA.

This sequence in the N-terminal section; belongs to the N-acetylglucosamine-1-phosphate uridyltransferase family. It in the C-terminal section; belongs to the transferase hexapeptide repeat family. Homotrimer. The cofactor is Mg(2+).

Its subcellular location is the cytoplasm. It catalyses the reaction alpha-D-glucosamine 1-phosphate + acetyl-CoA = N-acetyl-alpha-D-glucosamine 1-phosphate + CoA + H(+). It carries out the reaction N-acetyl-alpha-D-glucosamine 1-phosphate + UTP + H(+) = UDP-N-acetyl-alpha-D-glucosamine + diphosphate. It participates in nucleotide-sugar biosynthesis; UDP-N-acetyl-alpha-D-glucosamine biosynthesis; N-acetyl-alpha-D-glucosamine 1-phosphate from alpha-D-glucosamine 6-phosphate (route II): step 2/2. Its pathway is nucleotide-sugar biosynthesis; UDP-N-acetyl-alpha-D-glucosamine biosynthesis; UDP-N-acetyl-alpha-D-glucosamine from N-acetyl-alpha-D-glucosamine 1-phosphate: step 1/1. It functions in the pathway bacterial outer membrane biogenesis; LPS lipid A biosynthesis. In terms of biological role, catalyzes the last two sequential reactions in the de novo biosynthetic pathway for UDP-N-acetylglucosamine (UDP-GlcNAc). The C-terminal domain catalyzes the transfer of acetyl group from acetyl coenzyme A to glucosamine-1-phosphate (GlcN-1-P) to produce N-acetylglucosamine-1-phosphate (GlcNAc-1-P), which is converted into UDP-GlcNAc by the transfer of uridine 5-monophosphate (from uridine 5-triphosphate), a reaction catalyzed by the N-terminal domain. This Thermus thermophilus (strain ATCC 27634 / DSM 579 / HB8) protein is Bifunctional protein GlmU.